An 882-amino-acid chain; its full sequence is Ion channel DMI1 (882 aa).

The segment at 1-122 is disordered; that stretch reads MAKSNEESSN…PSSSSITKQQ (122 aa). Polar residues predominate over residues 48 to 62; it reads TSTTKTDFSEQQWNY. The segment covering 78–95 has biased composition (pro residues); that stretch reads PPPPPSKPPVNLIPPHPR. Low complexity predominate over residues 107-117; sequence SSLLPQPSSSS. 4 consecutive transmembrane segments (helical) span residues 129 to 149, 192 to 212, 255 to 275, and 307 to 327; these read SPIF…SAYL, TIAL…YKYL, LALL…LYAV, and IVSV…LGLV. 2 consecutive RCK N-terminal domains span residues 348–489 and 608–757; these read RNHV…ETVV and PEKI…DKSI. Positions 378-403 form a coiled coil; the sequence is VIVVLAEKEKEEMEMDIAKLEFDFMG.

The protein belongs to the castor/pollux (TC 1.A.1.23) family. In terms of assembly, interacts (via c-terminus) with CNGC15A, CNGC15B and CNGC15C (via N-terminus). The Nod factor has no effect on these interactions, implying that the complex is maintained after activation. Mainly expressed in roots and nodules. Also detected in pods, flowers, leaves, and stems.

The protein resides in the nucleus membrane. Required for early signal transduction events leading to endosymbiosis. Acts early in a signal transduction chain leading from the perception of Nod factor to the activation of calcium spiking. Also involved in mycorrhizal symbiosis. May be involved in the regulation of the calcium channel responsible for calcium spiking by mobilizing another cation, and thereby altering the membrane potential. This is Ion channel DMI1 from Medicago truncatula (Barrel medic).